The primary structure comprises 196 residues: Probable GTP-binding protein EngB (196 aa).

The 174-residue stretch at 22–195 (KLPEVALAGR…WNWIESITKV (174 aa)) folds into the EngB-type G domain. Residues 30–37 (GRSNVGKS), 57–61 (GKTQT), 75–78 (DVPG), 142–145 (TKID), and 174–176 (FSA) each bind GTP. Mg(2+) contacts are provided by serine 37 and threonine 59.

Belongs to the TRAFAC class TrmE-Era-EngA-EngB-Septin-like GTPase superfamily. EngB GTPase family. Mg(2+) is required as a cofactor.

In terms of biological role, necessary for normal cell division and for the maintenance of normal septation. The sequence is that of Probable GTP-binding protein EngB from Ligilactobacillus salivarius (strain UCC118) (Lactobacillus salivarius).